The sequence spans 2464 residues: Highly reducing polyketide synthase xilA (2464 aa).

Residues 9-437 (HDPIALVGIG…GTNGHCIIDH (429 aa)) form the Ketosynthase family 3 (KS3) domain. Residues cysteine 182, histidine 318, and histidine 360 each act as for beta-ketoacyl synthase activity in the active site. Positions 461-487 (QNGINGTNGTNGTNGTNGTNGTNGTNG) are enriched in low complexity. The interval 461–495 (QNGINGTNGTNGTNGTNGTNGTNGTNGHHNPKTEA) is disordered. Residues 589 to 911 (FIFTGQGAQW…LKRNEDAQRL (323 aa)) form the Malonyl-CoA:ACP transacylase (MAT) domain. Positions 983-1121 (HDLLGSKVPG…GQIKIEVSTF (139 aa)) are N-terminal hotdog fold. Residues 983 to 1286 (HDLLGSKVPG…FTSLNNEQES (304 aa)) enclose the PKS/mFAS DH domain. Histidine 1015 functions as the Proton acceptor; for dehydratase activity in the catalytic mechanism. The C-terminal hotdog fold stretch occupies residues 1133-1286 (GRLVDAQTWY…FTSLNNEQES (154 aa)). Aspartate 1199 serves as the catalytic Proton donor; for dehydratase activity. Residues 1282-1490 (NEQESTSTGD…TEPAHHSTIT (209 aa)) form a methyltransferase (CMeT) domain region. Positions 1716–2028 (GILTSLYFKP…KGTHIGKMVI (313 aa)) constitute an Enoyl reductase (ER) domain. One can recognise a Ketoreductase (KR) domain in the interval 2052–2231 (ANYILVGGMS…ATTVSLGFIN (180 aa)). The region spanning 2383–2461 (ETVTFVTDAI…SIAQVIVEEA (79 aa)) is the Carrier domain. At serine 2420 the chain carries O-(pantetheine 4'-phosphoryl)serine.

Pantetheine 4'-phosphate is required as a cofactor.

The protein operates within secondary metabolite biosynthesis. Its function is as follows. Highly reducing polyketide synthase; part of the gene cluster that mediates the biosynthesis of the 6-methyl-2-pyrone derivative xylariolide D. XilA produces the 5-alkyl-6-methyl-2-pyrone backbone called prexylariolide D via sequential condensations of 4 malonyl-CoA units with one acetyl-CoA starter unit. During the biosynthesis, the linear polyketide chain is branched by the addition of an acetyl unit as the origin of the methyl group at the 2-pyrone ring. Prexylariolide D is then hydroxylated at the side chain by xilC to form the final product, xylariolide D. In Penicillium rubens (strain ATCC 28089 / DSM 1075 / NRRL 1951 / Wisconsin 54-1255) (Penicillium chrysogenum), this protein is Highly reducing polyketide synthase xilA.